Reading from the N-terminus, the 238-residue chain is Protein odd-skipped-related 2 (238 aa).

The disordered stretch occupies residues 105 to 126 (EDPPVTGQSRLSPERRPARGRL). 3 C2H2-type zinc fingers span residues 134 to 156 (FICR…ERTH), 162 to 184 (YTCD…RYIH), and 190 to 212 (FKCQ…KTLH).

Belongs to the Odd C2H2-type zinc-finger protein family. As to expression, at the 8-somite stage, expressed in the pronephros, with weak generalized expression elsewhere. At 24 hpf, expressed in the kidney tubules and the anterior duct, and also in the gut. At 60 hpf, expressed in the tubules and the pectoral fin buds.

The protein resides in the nucleus. Transcriptional repressor. Required for pronephric kidney development. In Danio rerio (Zebrafish), this protein is Protein odd-skipped-related 2.